A 447-amino-acid chain; its full sequence is Argininosuccinate lyase (447 aa).

This sequence belongs to the lyase 1 family. Argininosuccinate lyase subfamily.

Its subcellular location is the cytoplasm. The enzyme catalyses 2-(N(omega)-L-arginino)succinate = fumarate + L-arginine. It participates in amino-acid biosynthesis; L-arginine biosynthesis; L-arginine from L-ornithine and carbamoyl phosphate: step 3/3. The sequence is that of Argininosuccinate lyase from Bacteroides fragilis (strain YCH46).